A 291-amino-acid polypeptide reads, in one-letter code: Potassium-transporting ATPase subunit beta (291 aa).

Residues 1–36 (MAALQEKKSCSQRMEEFRHYCWNPDTGQMLGRTLSR) lie on the Cytoplasmic side of the membrane. A helical; Signal-anchor for type II membrane protein transmembrane segment spans residues 37 to 57 (WVWISLYYVAFYVVMTGLFAL). Topologically, residues 58-291 (CIYVLMQTID…KVEFKLKIQK (234 aa)) are extracellular. N-linked (GlcNAc...) asparagine glycosylation is found at Asn-99, Asn-103, Asn-130, Asn-146, and Asn-161. The cysteines at positions 131 and 152 are disulfide-linked. An intrachain disulfide couples Cys-162 to Cys-178. N-linked (GlcNAc...) asparagine glycans are attached at residues Asn-193 and Asn-222. Residues 194–291 (STPPRVDCTF…KVEFKLKIQK (98 aa)) form an immunoglobulin-like region. Cys-201 and Cys-263 are joined by a disulfide.

It belongs to the X(+)/potassium ATPases subunit beta family. As to quaternary structure, the ATPase pump is composed of two subunits: alpha (catalytic) and beta (regulatory). Interacts with alpha subunit ATP12A; this interaction is required for the formation of a functionally active pump and targeting at the plasma membrane. Interacts (via N-terminus) with alpha subunit ATP4A (via the P-domain). In terms of processing, N-glycosylation is necessary for assembly and functional expression of the pump at the plasma membrane.

It localises to the apical cell membrane. The protein localises to the cell membrane. The beta subunit of the gastric H(+)/K(+) ATPase pump which transports H(+) ions in exchange for K(+) ions across the apical membrane of parietal cells. Plays a structural and regulatory role in the assembly and membrane targeting of a functionally active pump. Within a transport cycle, the transfer of a H(+) ion across the membrane is coupled to ATP hydrolysis and is associated with a transient phosphorylation of the alpha subunit that shifts the pump conformation from inward-facing (E1) to outward-facing state (E2). Interacts with the phosphorylation domain of the alpha subunit and functions as a ratchet, stabilizing the lumenal-open E2 conformation and preventing the reverse reaction of the transport cycle. This chain is Potassium-transporting ATPase subunit beta (ATP4B), found in Oryctolagus cuniculus (Rabbit).